Reading from the N-terminus, the 688-residue chain is MDFITINSSNKTEEFALKQVVKQATSSLLYRLGKTIILASVCVEREPVSEDFLPLVVQFLEKSYAAGKIPGGFVKREGRAQDFEILTSRLIDRTLRPLFPKDYRYPTQITLMVLSHDIENDLQVSALNAASAALFLAHIAPIKSVSACRIARIGNEFIINPNTSLLNQSSLDLFVSGTKESLNMIEMRSLGQQLNALEEPLMLKALELAQKSLKETCTLYEEVFTPHQNELLFKESQGIIFNERLLDLLKNQYFDEIIKGIESSALSERENVFNEIAKKISEAHSEFSLEEIEWSLEKVKKTEIRRMIIQDKIRPDKRALEEVRPILIESDLLPMAHSSILFTRGQTQSLVVGVLGTDNDAQTHESLEHKAPIKERFMFHYNFPPFCVGEASSIGAASRRELGHGNLAKRALETSIKNKEQVIRLVSEILESNGSSSMASVCAGSLALYASGVEIHDLVAGVAMGMVSEGQDHAILSDISGLEDAEGDMDFKIAGNLEGITAMQMDTKMSGIQLEILYQALLQAKEARKHILKIMHEAKEKIVINFSHLPTTEIFNVAPDKIVEIIGQGGRVIKEIVEKFEVKIDLNKPSGEVKIMGNKERVLKTKEFILNYLHSLDQELEQYAIDEVLEAQVKRIVDFGAFLSLPKGGEGLLRKQNMDRCQVVLKEGDSIRCRVISFNKGKIALDLA.

Mg(2+)-binding residues include Asp-484 and Asp-490. A KH domain is found at 550–609 (PTTEIFNVAPDKIVEIIGQGGRVIKEIVEKFEVKIDLNKPSGEVKIMGNKERVLKTKEFI). The region spanning 626–688 (DEVLEAQVKR…NKGKIALDLA (63 aa)) is the S1 motif domain.

It belongs to the polyribonucleotide nucleotidyltransferase family. Requires Mg(2+) as cofactor.

Its subcellular location is the cytoplasm. It catalyses the reaction RNA(n+1) + phosphate = RNA(n) + a ribonucleoside 5'-diphosphate. In terms of biological role, involved in mRNA degradation. Catalyzes the phosphorolysis of single-stranded polyribonucleotides processively in the 3'- to 5'-direction. The polypeptide is Polyribonucleotide nucleotidyltransferase (Helicobacter pylori (strain HPAG1)).